Consider the following 109-residue polypeptide: Nucleoid-associated protein ASA_2087 (109 aa).

Disordered stretches follow at residues 1 to 23 and 87 to 109; these read MFGK…RMQK and QSKS…KLPF. The segment covering 11–23 has biased composition (low complexity); the sequence is MKQAQQMQERMQK.

It belongs to the YbaB/EbfC family. Homodimer.

Its subcellular location is the cytoplasm. It localises to the nucleoid. Functionally, binds to DNA and alters its conformation. May be involved in regulation of gene expression, nucleoid organization and DNA protection. This is Nucleoid-associated protein ASA_2087 from Aeromonas salmonicida (strain A449).